We begin with the raw amino-acid sequence, 186 residues long: Ribosome-recycling factor (186 aa).

This sequence belongs to the RRF family.

The protein localises to the cytoplasm. Its function is as follows. Responsible for the release of ribosomes from messenger RNA at the termination of protein biosynthesis. May increase the efficiency of translation by recycling ribosomes from one round of translation to another. The polypeptide is Ribosome-recycling factor (Cytophaga hutchinsonii (strain ATCC 33406 / DSM 1761 / CIP 103989 / NBRC 15051 / NCIMB 9469 / D465)).